Consider the following 100-residue polypeptide: Urease subunit gamma (100 aa).

The protein belongs to the urease gamma subunit family. As to quaternary structure, heterotrimer of UreA (gamma), UreB (beta) and UreC (alpha) subunits. Three heterotrimers associate to form the active enzyme.

Its subcellular location is the cytoplasm. It carries out the reaction urea + 2 H2O + H(+) = hydrogencarbonate + 2 NH4(+). It functions in the pathway nitrogen metabolism; urea degradation; CO(2) and NH(3) from urea (urease route): step 1/1. The sequence is that of Urease subunit gamma from Haemophilus influenzae (strain PittEE).